The sequence spans 464 residues: 3-deoxy-D-manno-octulosonic acid transferase (464 aa).

The chain crosses the membrane as a helical; Signal-anchor span at residues 2–22; sequence MLLYYALSFILLPIYFIIILI. One can recognise an RPE1 insert domain in the interval 47-93; it reads YSLDFLHNEANKERFKGDTERRTAAYTSVREDSSTGSTSKLPLEASY. Glu107 (proton acceptor) is an active-site residue. Residues 311–312, 352–354, and 377–380 contribute to the CMP site; these read PR, FGE, and NILE.

Belongs to the glycosyltransferase group 1 family.

It is found in the cell inner membrane. The enzyme catalyses lipid IVA (E. coli) + CMP-3-deoxy-beta-D-manno-octulosonate = alpha-Kdo-(2-&gt;6)-lipid IVA (E. coli) + CMP + H(+). It participates in bacterial outer membrane biogenesis; LPS core biosynthesis. Involved in lipopolysaccharide (LPS) biosynthesis. Catalyzes the transfer of 3-deoxy-D-manno-octulosonate (Kdo) residue(s) from CMP-Kdo to lipid IV(A), the tetraacyldisaccharide-1,4'-bisphosphate precursor of lipid A. The polypeptide is 3-deoxy-D-manno-octulosonic acid transferase (waaA) (Rickettsia felis (strain ATCC VR-1525 / URRWXCal2) (Rickettsia azadi)).